Consider the following 110-residue polypeptide: UPF0060 membrane protein Noc_2955 (110 aa).

The next 4 helical transmembrane spans lie at 7-27 (VGLF…AYLW), 33-53 (TIWL…LLSL), 63-83 (AAYG…VNGI), and 87-107 (TWDL…MFAP).

It belongs to the UPF0060 family.

It localises to the cell inner membrane. The protein is UPF0060 membrane protein Noc_2955 of Nitrosococcus oceani (strain ATCC 19707 / BCRC 17464 / JCM 30415 / NCIMB 11848 / C-107).